The chain runs to 728 residues: Ribosome biogenesis protein bop1-B (728 aa).

The disordered stretch occupies residues 1–114; the sequence is MKRGSKRESG…ENDSSDEEDI (114 aa). A compositionally biased stretch (acidic residues) spans 50 to 67; that stretch reads SGTDSSDDEEDHSSEEVQ. 7 WD repeats span residues 393–432, 434–474, 514–556, 559–597, 600–639, 643–682, and 698–728; these read GHKD…CMKS, VLEG…RLLC, KHQK…SQNP, KNKG…LTKK, TNCK…KPYK, HHKK…DLLQ, and HRDL…RLFT.

The protein belongs to the WD repeat BOP1/ERB1 family. In terms of assembly, component of the PeBoW complex, composed of bop1, pes1 and wdr12. The complex is held together by bop1, which interacts with pes1 via its N-terminal domain and with wdr12 via a high-affinity interaction between the seven-bladed beta-propeller domains of the 2 proteins. The PeBoW complex associates with the 66S pre-ribosome.

It is found in the nucleus. The protein localises to the nucleolus. Its subcellular location is the nucleoplasm. Component of the PeBoW complex, which is required for maturation of 28S and 5.8S ribosomal RNAs and formation of the 60S ribosome. In Xenopus laevis (African clawed frog), this protein is Ribosome biogenesis protein bop1-B (bop1-b).